A 208-amino-acid polypeptide reads, in one-letter code: Kinetochore protein Spc25 (208 aa).

Residues 31 to 101 (SKIAAKHQLI…KKQRRDELMG (71 aa)) adopt a coiled-coil conformation.

The protein belongs to the SPC25 family. As to quaternary structure, component of the Ndc80 complex, which is composed of Ndc80, Nuf2 and Spc25.

It localises to the nucleus. The protein localises to the chromosome. Its subcellular location is the centromere. It is found in the kinetochore. Its function is as follows. Acts as a component of the essential kinetochore-associated Ndc80 complex, which is required for chromosome segregation and spindle checkpoint activity during meiosis and mitosis. Required for kinetochore integrity and the organization of stable microtubule binding sites in the outer plate of the kinetochore. Participates in SAC signaling that responds specifically to disruptions in spindle microtubule dynamics. The NDC80 complex synergistically enhances the affinity of the SKA1 complex for microtubules and may allow the NDC80 complex to track depolymerizing microtubules. In Drosophila mojavensis (Fruit fly), this protein is Kinetochore protein Spc25.